A 119-amino-acid chain; its full sequence is Basic phospholipase A2 (119 aa).

Cystine bridges form between Cys-11-Cys-72, Cys-27-Cys-118, Cys-29-Cys-45, Cys-44-Cys-100, Cys-51-Cys-93, Cys-61-Cys-86, and Cys-79-Cys-91. Ca(2+)-binding residues include Tyr-28, Gly-30, and Gly-32. The active site involves His-48. Asp-49 contacts Ca(2+). Asn-82 is a glycosylation site (N-linked (GlcNAc...) asparagine). The active site involves Asp-94.

Belongs to the phospholipase A2 family. Group I subfamily. D49 sub-subfamily. Requires Ca(2+) as cofactor. As to expression, expressed by the venom gland.

The protein localises to the secreted. The enzyme catalyses a 1,2-diacyl-sn-glycero-3-phosphocholine + H2O = a 1-acyl-sn-glycero-3-phosphocholine + a fatty acid + H(+). In terms of biological role, snake venom phospholipase A2 (PLA2) that shows weak myotoxicity and induces edema in mice. Shows no cytotoxicity in vitro. Has an anticoagulant effect in vitro. PLA2 catalyzes the calcium-dependent hydrolysis of the 2-acyl groups in 3-sn-phosphoglycerides. This is Basic phospholipase A2 from Micrurus mipartitus (Red-tailed coral snake).